Consider the following 195-residue polypeptide: Probable chemoreceptor glutamine deamidase CheD 2 (195 aa).

This sequence belongs to the CheD family.

It carries out the reaction L-glutaminyl-[protein] + H2O = L-glutamyl-[protein] + NH4(+). In terms of biological role, probably deamidates glutamine residues to glutamate on methyl-accepting chemotaxis receptors (MCPs), playing an important role in chemotaxis. The polypeptide is Probable chemoreceptor glutamine deamidase CheD 2 (Burkholderia thailandensis (strain ATCC 700388 / DSM 13276 / CCUG 48851 / CIP 106301 / E264)).